A 224-amino-acid polypeptide reads, in one-letter code: Ribonuclease 3 (224 aa).

One can recognise an RNase III domain in the interval I4–G127. Position 40 (E40) interacts with Mg(2+). D44 is a catalytic residue. Mg(2+) contacts are provided by D113 and E116. E116 is an active-site residue. The region spanning D154–A223 is the DRBM domain.

This sequence belongs to the ribonuclease III family. Homodimer. Mg(2+) serves as cofactor.

It localises to the cytoplasm. It catalyses the reaction Endonucleolytic cleavage to 5'-phosphomonoester.. Functionally, digests double-stranded RNA. Involved in the processing of primary rRNA transcript to yield the immediate precursors to the large and small rRNAs (23S and 16S). Also processes some mRNAs, and tRNAs when they are encoded in the rRNA operon. Its function is as follows. CRISPR (clustered regularly interspaced short palindromic repeat) is an adaptive immune system that provides protection against mobile genetic elements (viruses, transposable elements and conjugative plasmids). CRISPR clusters contain spacers, sequences complementary to antecedent mobile elements, and target invading nucleic acids. CRISPR clusters are transcribed and processed into CRISPR RNA (crRNA). In this organism endogenous ribonuclease 3 and Cas9 are required for correct coprocessing of pre-crRNA and the trans-encoded small RNA (tracrRNA). Cas9, crRNA and tracrRNA are required for cleavage of invading DNA. Complements pre-crRNA and tracrRNA coprocessing defects in an rnc deletion in S.pyogenes strain 370. The chain is Ribonuclease 3 from Campylobacter jejuni subsp. jejuni serotype O:2 (strain ATCC 700819 / NCTC 11168).